The sequence spans 156 residues: Small ribosomal subunit protein uS7 (156 aa).

It belongs to the universal ribosomal protein uS7 family. In terms of assembly, part of the 30S ribosomal subunit. Contacts proteins S9 and S11.

Its function is as follows. One of the primary rRNA binding proteins, it binds directly to 16S rRNA where it nucleates assembly of the head domain of the 30S subunit. Is located at the subunit interface close to the decoding center, probably blocks exit of the E-site tRNA. The polypeptide is Small ribosomal subunit protein uS7 (Teredinibacter turnerae (strain ATCC 39867 / T7901)).